The following is a 493-amino-acid chain: Probable cytosol aminopeptidase (493 aa).

Mn(2+) is bound by residues K262 and D267. The active site involves K274. 3 residues coordinate Mn(2+): D285, D344, and E346. Residue R348 is part of the active site.

It belongs to the peptidase M17 family. Mn(2+) serves as cofactor.

Its subcellular location is the cytoplasm. The catalysed reaction is Release of an N-terminal amino acid, Xaa-|-Yaa-, in which Xaa is preferably Leu, but may be other amino acids including Pro although not Arg or Lys, and Yaa may be Pro. Amino acid amides and methyl esters are also readily hydrolyzed, but rates on arylamides are exceedingly low.. The enzyme catalyses Release of an N-terminal amino acid, preferentially leucine, but not glutamic or aspartic acids.. Presumably involved in the processing and regular turnover of intracellular proteins. Catalyzes the removal of unsubstituted N-terminal amino acids from various peptides. The protein is Probable cytosol aminopeptidase of Xanthomonas campestris pv. campestris (strain 8004).